The sequence spans 255 residues: Imidazole glycerol phosphate synthase subunit HisF (255 aa).

Catalysis depends on residues Asp12 and Asp131.

Belongs to the HisA/HisF family. In terms of assembly, heterodimer of HisH and HisF.

The protein resides in the cytoplasm. It catalyses the reaction 5-[(5-phospho-1-deoxy-D-ribulos-1-ylimino)methylamino]-1-(5-phospho-beta-D-ribosyl)imidazole-4-carboxamide + L-glutamine = D-erythro-1-(imidazol-4-yl)glycerol 3-phosphate + 5-amino-1-(5-phospho-beta-D-ribosyl)imidazole-4-carboxamide + L-glutamate + H(+). It participates in amino-acid biosynthesis; L-histidine biosynthesis; L-histidine from 5-phospho-alpha-D-ribose 1-diphosphate: step 5/9. In terms of biological role, IGPS catalyzes the conversion of PRFAR and glutamine to IGP, AICAR and glutamate. The HisF subunit catalyzes the cyclization activity that produces IGP and AICAR from PRFAR using the ammonia provided by the HisH subunit. This Salinispora arenicola (strain CNS-205) protein is Imidazole glycerol phosphate synthase subunit HisF.